The chain runs to 333 residues: Cytochrome f (333 aa).

Residues 1-44 (MRNACTRARLTRTARAMVKTLFIAIASVTFFFTSDLALPQSAAA) form the signal peptide. Positions 45, 66, 69, and 70 each coordinate heme. The helical transmembrane segment at 299–318 (VGWLIAFVALVMLAQVMLVL) threads the bilayer.

It belongs to the cytochrome f family. The 4 large subunits of the cytochrome b6-f complex are cytochrome b6, subunit IV (17 kDa polypeptide, PetD), cytochrome f and the Rieske protein, while the 4 small subunits are PetG, PetL, PetM and PetN. The complex functions as a dimer. Heme serves as cofactor.

The protein resides in the cellular thylakoid membrane. Its function is as follows. Component of the cytochrome b6-f complex, which mediates electron transfer between photosystem II (PSII) and photosystem I (PSI), cyclic electron flow around PSI, and state transitions. The polypeptide is Cytochrome f (Nostoc sp. (strain PCC 7120 / SAG 25.82 / UTEX 2576)).